The primary structure comprises 208 residues: Probable GTP-binding protein EngB (208 aa).

The 174-residue stretch at 22 to 195 folds into the EngB-type G domain; the sequence is GLPEIALAGR…WGALEDIFVE (174 aa). GTP-binding positions include 30–37, 57–61, 75–78, 142–145, and 174–176; these read GRSNVGKS, GKTRT, DLPG, TKSD, and ISS. Ser-37 and Thr-59 together coordinate Mg(2+).

This sequence belongs to the TRAFAC class TrmE-Era-EngA-EngB-Septin-like GTPase superfamily. EngB GTPase family. It depends on Mg(2+) as a cofactor.

In terms of biological role, necessary for normal cell division and for the maintenance of normal septation. The polypeptide is Probable GTP-binding protein EngB (Alkaliphilus metalliredigens (strain QYMF)).